The sequence spans 374 residues: UDP-N-acetylglucosamine--N-acetylmuramyl-(pentapeptide) pyrophosphoryl-undecaprenol N-acetylglucosamine transferase (374 aa).

Residues Thr14–Gly16, Asn125, Arg168, Ser196, and Gln297 each bind UDP-N-acetyl-alpha-D-glucosamine.

This sequence belongs to the glycosyltransferase 28 family. MurG subfamily.

It localises to the cell inner membrane. It carries out the reaction di-trans,octa-cis-undecaprenyl diphospho-N-acetyl-alpha-D-muramoyl-L-alanyl-D-glutamyl-meso-2,6-diaminopimeloyl-D-alanyl-D-alanine + UDP-N-acetyl-alpha-D-glucosamine = di-trans,octa-cis-undecaprenyl diphospho-[N-acetyl-alpha-D-glucosaminyl-(1-&gt;4)]-N-acetyl-alpha-D-muramoyl-L-alanyl-D-glutamyl-meso-2,6-diaminopimeloyl-D-alanyl-D-alanine + UDP + H(+). Its pathway is cell wall biogenesis; peptidoglycan biosynthesis. Its function is as follows. Cell wall formation. Catalyzes the transfer of a GlcNAc subunit on undecaprenyl-pyrophosphoryl-MurNAc-pentapeptide (lipid intermediate I) to form undecaprenyl-pyrophosphoryl-MurNAc-(pentapeptide)GlcNAc (lipid intermediate II). This Rhodopseudomonas palustris (strain BisA53) protein is UDP-N-acetylglucosamine--N-acetylmuramyl-(pentapeptide) pyrophosphoryl-undecaprenol N-acetylglucosamine transferase.